The sequence spans 199 residues: FMN-dependent NADH:quinone oxidoreductase (199 aa).

FMN is bound by residues serine 9 and 95-98; that span reads MYNF.

Belongs to the azoreductase type 1 family. Homodimer. The cofactor is FMN.

The enzyme catalyses 2 a quinone + NADH + H(+) = 2 a 1,4-benzosemiquinone + NAD(+). The catalysed reaction is N,N-dimethyl-1,4-phenylenediamine + anthranilate + 2 NAD(+) = 2-(4-dimethylaminophenyl)diazenylbenzoate + 2 NADH + 2 H(+). Quinone reductase that provides resistance to thiol-specific stress caused by electrophilic quinones. Functionally, also exhibits azoreductase activity. Catalyzes the reductive cleavage of the azo bond in aromatic azo compounds to the corresponding amines. The protein is FMN-dependent NADH:quinone oxidoreductase of Dechloromonas aromatica (strain RCB).